Here is a 306-residue protein sequence, read N- to C-terminus: Probable dimethyladenosine transferase (306 aa).

S-adenosyl-L-methionine is bound by residues H30, L32, G57, E78, D106, and N121.

This sequence belongs to the class I-like SAM-binding methyltransferase superfamily. rRNA adenine N(6)-methyltransferase family. As to quaternary structure, part of the small subunit (SSU) processome, composed of more than 70 proteins and the RNA chaperone small nucleolar RNA (snoRNA) U3.

The protein resides in the nucleus. It is found in the nucleolus. The catalysed reaction is adenosine(1779)/adenosine(1780) in 18S rRNA + 4 S-adenosyl-L-methionine = N(6)-dimethyladenosine(1779)/N(6)-dimethyladenosine(1780) in 18S rRNA + 4 S-adenosyl-L-homocysteine + 4 H(+). Specifically dimethylates two adjacent adenosines in the loop of a conserved hairpin near the 3'-end of 18S rRNA in the 40S particle. Involved in the pre-rRNA processing steps leading to small-subunit rRNA production independently of its RNA-modifying catalytic activity. Part of the small subunit (SSU) processome, first precursor of the small eukaryotic ribosomal subunit. During the assembly of the SSU processome in the nucleolus, many ribosome biogenesis factors, an RNA chaperone and ribosomal proteins associate with the nascent pre-rRNA and work in concert to generate RNA folding, modifications, rearrangements and cleavage as well as targeted degradation of pre-ribosomal RNA by the RNA exosome. The sequence is that of Probable dimethyladenosine transferase from Drosophila melanogaster (Fruit fly).